Reading from the N-terminus, the 662-residue chain is Biosynthetic arginine decarboxylase (662 aa).

N6-(pyridoxal phosphate)lysine is present on Lys-126. 308-318 (LNVGGGLGVDY) contacts substrate.

The protein belongs to the Orn/Lys/Arg decarboxylase class-II family. SpeA subfamily. Requires Mg(2+) as cofactor. It depends on pyridoxal 5'-phosphate as a cofactor.

The catalysed reaction is L-arginine + H(+) = agmatine + CO2. In terms of biological role, catalyzes the biosynthesis of agmatine from arginine. The protein is Biosynthetic arginine decarboxylase of Deinococcus radiodurans (strain ATCC 13939 / DSM 20539 / JCM 16871 / CCUG 27074 / LMG 4051 / NBRC 15346 / NCIMB 9279 / VKM B-1422 / R1).